A 313-amino-acid polypeptide reads, in one-letter code: Deoxyribonucleoside regulator (313 aa).

Residues 23-42 (QQQIAEQLNISRPTVSRLLQ) constitute a DNA-binding region (H-T-H motif).

Belongs to the SorC transcriptional regulatory family. Homooctamer.

Functionally, negative regulator of the dra-nupC-pdp operon. DeoR binds cooperatively to the operator DNA, which consists of a palindrome and a direct repeat sequence located 3' to the palindrome. This Bacillus subtilis (strain 168) protein is Deoxyribonucleoside regulator.